A 220-amino-acid chain; its full sequence is tRNA (guanine-N(7)-)-methyltransferase (220 aa).

Positions 42, 67, and 122 each coordinate S-adenosyl-L-methionine. Asp-122 is a catalytic residue. Substrate is bound by residues Lys-126, Asp-158, and 198-201 (TEYE).

This sequence belongs to the class I-like SAM-binding methyltransferase superfamily. TrmB family.

The enzyme catalyses guanosine(46) in tRNA + S-adenosyl-L-methionine = N(7)-methylguanosine(46) in tRNA + S-adenosyl-L-homocysteine. Its pathway is tRNA modification; N(7)-methylguanine-tRNA biosynthesis. Functionally, catalyzes the formation of N(7)-methylguanine at position 46 (m7G46) in tRNA. The chain is tRNA (guanine-N(7)-)-methyltransferase from Mycoplasma capricolum subsp. capricolum (strain California kid / ATCC 27343 / NCTC 10154).